Reading from the N-terminus, the 240-residue chain is Putative S-adenosylmethionine-dependent methyltransferase RcsF (240 aa).

Positions 5–142 (ISPIGHVRSC…YVPYADIVPD (138 aa)) constitute a TsaA-like domain. Residues 22–24 (PRQ), 63–64 (HQ), Arg-91, and 122–125 (LDGT) each bind S-adenosyl-L-methionine.

It belongs to the tRNA methyltransferase O family.

The polypeptide is Putative S-adenosylmethionine-dependent methyltransferase RcsF (rcsF) (Pseudomonas aeruginosa).